Reading from the N-terminus, the 314-residue chain is Olfactory receptor 5B12 (314 aa).

Topologically, residues 1–23 (MENNTEVTEFILVGLTDDPELQI) are extracellular. Asparagine 3 is a glycosylation site (N-linked (GlcNAc...) asparagine). The chain crosses the membrane as a helical span at residues 24 to 44 (PLFIVFLFIYLITLVGNLGMI). Residues 45 to 52 (ELILLDSC) lie on the Cytoplasmic side of the membrane. Residues 53-73 (LHTPMYFFLSNLSLVDFGYSS) traverse the membrane as a helical segment. The Extracellular portion of the chain corresponds to 74–97 (AVTPKVMVGFLTGDKFILYNACAT). Residues cysteine 95 and cysteine 187 are joined by a disulfide bond. Residues 98 to 118 (QFFFFVAFITAESFLLASMAY) traverse the membrane as a helical segment. The Cytoplasmic segment spans residues 119–137 (DRYAALCKPLHYTTTMTTN). The helical transmembrane segment at 138 to 158 (VCACLAIGSYICGFLNASIHT) threads the bilayer. The Extracellular portion of the chain corresponds to 159–194 (GNTFRLSFCRSNVVEHFFCDAPPLLTLSCSDNYISE). Residues 195-215 (MVIFFVVGFNDLFSILVILIS) traverse the membrane as a helical segment. The Cytoplasmic portion of the chain corresponds to 216 to 235 (YLFIFITIMKMRSPEGRQKA). A helical transmembrane segment spans residues 236-256 (FSTCASHLTAVSIFYGTGIFM). Topologically, residues 257-269 (YLRPNSSHFMGTD) are extracellular. Asparagine 261 is a glycosylation site (N-linked (GlcNAc...) asparagine). Residues 270–290 (KMASVFYAIVIPMLNPLVYSL) traverse the membrane as a helical segment. The Cytoplasmic segment spans residues 291–314 (RNKEVKSAFKKTVGKAKASIGFIF).

This sequence belongs to the G-protein coupled receptor 1 family.

The protein localises to the cell membrane. In terms of biological role, odorant receptor. The sequence is that of Olfactory receptor 5B12 (OR5B12) from Homo sapiens (Human).